The following is a 37-amino-acid chain: Potassium channel toxin alpha-KTx 1.3 (37 aa).

Q1 is modified (pyrrolidone carboxylic acid). Disulfide bonds link C7–C28, C13–C33, and C17–C35. The interval 26–33 (GKCMGKKC) is interaction with Ca(2+)-activated K(+) channels.

It belongs to the short scorpion toxin superfamily. Potassium channel inhibitor family. Alpha-KTx 01 subfamily. Expressed by the venom gland.

The protein resides in the secreted. Functionally, blocks selectively the high conductance calcium-activated (maxi-K) potassium channels (KCa1.1/KCNMA1). This Hottentotta tamulus (Eastern Indian scorpion) protein is Potassium channel toxin alpha-KTx 1.3.